Consider the following 497-residue polypeptide: Vacuolar-processing enzyme beta-isozyme 1 (497 aa).

The signal sequence occupies residues 1 to 23 (MAARCWVWGFVVALLAVAAAADG). N153 is a glycosylation site (N-linked (GlcNAc...) asparagine). H180 is an active-site residue. Catalysis depends on C222, which acts as the Nucleophile. Residues C255 and C269 are joined by a disulfide bond. N340 carries an N-linked (GlcNAc...) asparagine glycan. 2 cysteine pairs are disulfide-bonded: C432–C462 and C444–C479.

The protein belongs to the peptidase C13 family. In terms of processing, auto-catalytic activation. Expressed in developing seeds.

It localises to the protein storage vacuole. It carries out the reaction Hydrolysis of proteins and small molecule substrates at -Asn-|-Xaa- bonds.. Functionally, asparagine-specific endopeptidase that may be involved in processing of proteins targeted to vacuoles. Cysteine protease required for post-translational proteolysis of seed storage proteins in the protein storage vacuole (PSV) of developing seeds, by processing of proglutelin precursor to mature glutelin subunits, thus contributing to the formation of protein crystalline structures in PSV. This Oryza sativa subsp. japonica (Rice) protein is Vacuolar-processing enzyme beta-isozyme 1.